The sequence spans 83 residues: Acid shock protein (83 aa).

Residues 1-21 (MKKVLALVVAAAMGLSSAAFA) form the signal peptide. Over residues 22–40 (AETATPAKTATPAKTTQNT) the composition is skewed to low complexity. Residues 22 to 56 (AETATPAKTATPAKTTQNTQHHKKQHKKTVEQKAQ) constitute a propeptide that is removed on maturation. The tract at residues 22 to 83 (AETATPAKTA…TSKTTSQPAA (62 aa)) is disordered. Basic residues predominate over residues 57–70 (AAKKHQKKDGKKAP). Residues 71-83 (AKSTSKTTSQPAA) show a composition bias toward low complexity.

This sequence belongs to the Asr family. Post-translationally, proteolytic processing gives rise to the active protein.

The protein localises to the periplasm. Functionally, required for growth and/or survival at acidic conditions. In Salmonella heidelberg (strain SL476), this protein is Acid shock protein.